A 501-amino-acid polypeptide reads, in one-letter code: Lysine--tRNA ligase (501 aa).

Mg(2+) is bound by residues Glu411 and Glu418.

This sequence belongs to the class-II aminoacyl-tRNA synthetase family. In terms of assembly, homodimer. Requires Mg(2+) as cofactor.

Its subcellular location is the cytoplasm. The catalysed reaction is tRNA(Lys) + L-lysine + ATP = L-lysyl-tRNA(Lys) + AMP + diphosphate. The chain is Lysine--tRNA ligase from Thiobacillus denitrificans (strain ATCC 25259 / T1).